The sequence spans 515 residues: Histidine ammonia-lyase (515 aa).

Residues 148-150 (ASG) constitute a cross-link (5-imidazolinone (Ala-Gly)). S149 carries the 2,3-didehydroalanine (Ser) modification.

It belongs to the PAL/histidase family. In terms of processing, contains an active site 4-methylidene-imidazol-5-one (MIO), which is formed autocatalytically by cyclization and dehydration of residues Ala-Ser-Gly.

Its subcellular location is the cytoplasm. The catalysed reaction is L-histidine = trans-urocanate + NH4(+). Its pathway is amino-acid degradation; L-histidine degradation into L-glutamate; N-formimidoyl-L-glutamate from L-histidine: step 1/3. The sequence is that of Histidine ammonia-lyase from Pseudomonas syringae pv. tomato (strain ATCC BAA-871 / DC3000).